We begin with the raw amino-acid sequence, 277 residues long: MSKSLKKLVEESREKNQPEVDMSDRGISSMLDVNGLFSLAHITQLVLSHNKLTTVPPNVAELKNLEVLNFFNNQIEELPTQISSLQKLKHLNLGMNRLNTLPRGFGSSRLLEVLELTYNNLNEHSLPGNFFYLTTLRALYLSDNDFEILPPDIGKLTKLQILSLRDNDLISLPKEIGELTQLKELHIQGNRLTVLPPELGNLDLTGQKQVFKAENNPWVTPIADQFQLGVSHVFEYIRSETYKYLYGRHMQANPEPPKKNNDKSKKISRKPLAAKNK.

Residues 1 to 23 are disordered; that stretch reads MSKSLKKLVEESREKNQPEVDMS. Ser-2 carries the N-acetylserine modification. Residues 7–23 are compositionally biased toward basic and acidic residues; it reads KLVEESREKNQPEVDMS. LRR repeat units follow at residues 41–63, 64–85, 87–108, 110–133, 135–156, 158–179, and 181–202; these read HITQLVLSHNKLTTVPPNVAELK, NLEVLNFFNNQIEELPTQISSL, KLKHLNLGMNRLNTLPRGFGSS, LLEVLELTYNNLNEHSLPGNFFYL, TLRALYLSDNDFEILPPDIGKL, KLQILSLRDNDLISLPKEIGEL, and QLKELHIQGNRLTVLPPELGNL. Positions 250–277 are disordered; it reads MQANPEPPKKNNDKSKKISRKPLAAKNK. Residues 256–265 are compositionally biased toward basic and acidic residues; the sequence is PPKKNNDKSK.

Its function is as follows. Potentially plays a role in the Ras signal transduction pathway. Capable of suppressing v-Ras transformation in vitro. The chain is Ras suppressor protein 1 (Rsu1) from Mus musculus (Mouse).